The following is a 265-amino-acid chain: uncharacterized protein (265 aa).

The helical transmembrane segment at 1-21 (MAFNNSTIIIIIVIAFAFFLI) threads the bilayer. 2 N-linked (GlcNAc...) asparagine; by host glycosylation sites follow: N74 and N142.

The protein resides in the host membrane. The protein localises to the virion. This is an uncharacterized protein from Acanthamoeba polyphaga mimivirus (APMV).